The sequence spans 177 residues: Platelet glycoprotein IX (177 aa).

Residues 1–16 (MPAWGALFLLWATAEA) form the signal peptide. The 35-residue stretch at 17–51 (TKDCPSPCTCRALETMGLWVDCRGHGLTALPALPA) folds into the LRRNT domain. Over 17-147 (TKDCPSPCTC…QLQASWVRPG (131 aa)) the chain is Extracellular. The N-linked (GlcNAc...) asparagine glycan is linked to asparagine 60. Residues 60–83 (NNSLQSVPPGAFDHLPQLQTLDVT) form an LRR repeat. Residues 85–137 (NPWHCDCSLTYLRLWLEDRTPEALLQVRCASPSLAAHGPLGRLTGYQLGSCGW) enclose the LRRCT domain. A helical membrane pass occupies residues 148 to 168 (VLWDVALVAVAALGLALLAGL). Over 169 to 177 (LCATTEALD) the chain is Cytoplasmic.

Two GP-Ib beta are disulfide-linked to one GP-Ib alpha. GP-IX is complexed with the GP-Ib heterodimer via a non covalent linkage.

It is found in the membrane. The GPIb-V-IX complex functions as the vWF receptor and mediates vWF-dependent platelet adhesion to blood vessels. The adhesion of platelets to injured vascular surfaces in the arterial circulation is a critical initiating event in hemostasis. GP-IX may provide for membrane insertion and orientation of GP-Ib. This chain is Platelet glycoprotein IX (GP9), found in Homo sapiens (Human).